The sequence spans 398 residues: Stomatin-like protein 1 (398 aa).

The Tyrosine-type lysosomal sorting signal signature appears at Gly-6–Leu-10. Ser-28 is modified (phosphoserine). A helical; Signal-anchor for type III membrane protein transmembrane segment spans residues Leu-58–Ala-78. Topologically, residues Leu-79–Lys-398 are cytoplasmic. The region spanning Lys-287 to Lys-398 is the SCP2 domain.

The protein belongs to the band 7/mec-2 family. Interacts with STOM; may redistribute STOM from the plasma membrane to late endosomes. Interacts with FBXW7 isoform 3 and CDK2. In terms of tissue distribution, ubiquitously expressed at low levels. Expression is highest in brain.

Its subcellular location is the membrane. It localises to the late endosome membrane. The protein resides in the membrane raft. It is found in the cell membrane. The protein localises to the cytoplasmic vesicle. In terms of biological role, may play a role in cholesterol transfer to late endosomes. May play a role in modulating membrane acid-sensing ion channels. Can specifically inhibit proton-gated current of ASIC1 isoform 1. Can increase inactivation speed of ASIC3. May be involved in regulation of proton sensing in dorsal root ganglions. May play a role in protecting FBXW7 isoform 3 from degradation. In Homo sapiens (Human), this protein is Stomatin-like protein 1 (STOML1).